The sequence spans 429 residues: 3-phosphoshikimate 1-carboxyvinyltransferase (429 aa).

Residues Lys-23, Ser-24, and Arg-28 each coordinate 3-phosphoshikimate. Lys-23 provides a ligand contact to phosphoenolpyruvate. Residues Gly-95 and Arg-123 each contribute to the phosphoenolpyruvate site. 3-phosphoshikimate is bound by residues Ser-168, Gln-170, Asp-316, and Lys-343. Gln-170 is a binding site for phosphoenolpyruvate. Residue Asp-316 is the Proton acceptor of the active site. The phosphoenolpyruvate site is built by Arg-347 and Arg-389.

This sequence belongs to the EPSP synthase family. Monomer.

Its subcellular location is the cytoplasm. It catalyses the reaction 3-phosphoshikimate + phosphoenolpyruvate = 5-O-(1-carboxyvinyl)-3-phosphoshikimate + phosphate. It functions in the pathway metabolic intermediate biosynthesis; chorismate biosynthesis; chorismate from D-erythrose 4-phosphate and phosphoenolpyruvate: step 6/7. Its function is as follows. Catalyzes the transfer of the enolpyruvyl moiety of phosphoenolpyruvate (PEP) to the 5-hydroxyl of shikimate-3-phosphate (S3P) to produce enolpyruvyl shikimate-3-phosphate and inorganic phosphate. This chain is 3-phosphoshikimate 1-carboxyvinyltransferase, found in Bacillus cereus (strain G9842).